The primary structure comprises 375 residues: 23S rRNA (uracil(747)-C(5))-methyltransferase RlmC (375 aa).

The [4Fe-4S] cluster site is built by C3, C11, C14, and C87. 4 residues coordinate S-adenosyl-L-methionine: Q212, F241, E262, and N307. C334 acts as the Nucleophile in catalysis.

Belongs to the class I-like SAM-binding methyltransferase superfamily. RNA M5U methyltransferase family. RlmC subfamily.

It catalyses the reaction uridine(747) in 23S rRNA + S-adenosyl-L-methionine = 5-methyluridine(747) in 23S rRNA + S-adenosyl-L-homocysteine + H(+). Its function is as follows. Catalyzes the formation of 5-methyl-uridine at position 747 (m5U747) in 23S rRNA. The protein is 23S rRNA (uracil(747)-C(5))-methyltransferase RlmC of Serratia proteamaculans (strain 568).